Consider the following 332-residue polypeptide: Peroxidase C1C (332 aa).

Residues 1 to 9 (MLHASFSNA) form the signal peptide. At Gln10 the chain carries Pyrrolidone carboxylic acid. Cystine bridges form between Cys20–Cys100, Cys53–Cys58, Cys106–Cys310, and Cys186–Cys218. Asn22 carries an N-linked (GlcNAc...) asparagine glycan. Catalysis depends on His51, which acts as the Proton acceptor. Positions 52, 55, 57, 59, and 61 each coordinate Ca(2+). Asn66 is a glycosylation site (N-linked (GlcNAc...) asparagine). Pro148 serves as a coordination point for substrate. Position 179 (His179) interacts with heme b. Residue Thr180 participates in Ca(2+) binding. 3 N-linked (GlcNAc...) asparagine glycosylation sites follow: Asn195, Asn207, and Asn223. 3 residues coordinate Ca(2+): Asp231, Thr234, and Asp239. Asn264 is a glycosylation site (N-linked (GlcNAc...) asparagine).

The protein belongs to the peroxidase family. Classical plant (class III) peroxidase subfamily. It depends on Ca(2+) as a cofactor. Heme b serves as cofactor.

It is found in the secreted. The protein localises to the vacuole. It catalyses the reaction 2 a phenolic donor + H2O2 = 2 a phenolic radical donor + 2 H2O. Functionally, removal of H(2)O(2), oxidation of toxic reductants, biosynthesis and degradation of lignin, suberization, auxin catabolism, response to environmental stresses such as wounding, pathogen attack and oxidative stress. These functions might be dependent on each isozyme/isoform in each plant tissue. The chain is Peroxidase C1C (PRXC1C) from Armoracia rusticana (Horseradish).